Here is a 293-residue protein sequence, read N- to C-terminus: Bifunctional protein FolD (293 aa).

NADP(+) is bound by residues 165-167 (GRS), Ser190, and Ile231.

The protein belongs to the tetrahydrofolate dehydrogenase/cyclohydrolase family. In terms of assembly, homodimer.

The enzyme catalyses (6R)-5,10-methylene-5,6,7,8-tetrahydrofolate + NADP(+) = (6R)-5,10-methenyltetrahydrofolate + NADPH. It catalyses the reaction (6R)-5,10-methenyltetrahydrofolate + H2O = (6R)-10-formyltetrahydrofolate + H(+). Its pathway is one-carbon metabolism; tetrahydrofolate interconversion. Functionally, catalyzes the oxidation of 5,10-methylenetetrahydrofolate to 5,10-methenyltetrahydrofolate and then the hydrolysis of 5,10-methenyltetrahydrofolate to 10-formyltetrahydrofolate. This chain is Bifunctional protein FolD, found in Parasynechococcus marenigrum (strain WH8102).